A 134-amino-acid polypeptide reads, in one-letter code: Large ribosomal subunit protein eL32 (134 aa).

This sequence belongs to the eukaryotic ribosomal protein eL32 family.

This Apis mellifera (Honeybee) protein is Large ribosomal subunit protein eL32 (RpL32).